The primary structure comprises 780 residues: Cullin-1 (780 aa).

In terms of domain architecture, Cullin neddylation spans 710-771 (DRKSVISACI…EKEYMLRTEG (62 aa)). Residue Lys724 forms a Glycyl lysine isopeptide (Lys-Gly) (interchain with G-Cter in NEDD8) linkage.

Belongs to the cullin family. As to quaternary structure, component of an SCF (SKP1-CUL1-F-box protein) E3 ubiquitin ligase complex composed of cul-1, fsn-1, rpm-1 and skr-1. Interacts with Skp1-related proteins skr-1, skr-2, skr-3, skr-4, skr-7, skr-8, skr-9 and skr-10. Post-translationally, neddylated; which enhances the ubiquitination activity of SCF. In terms of tissue distribution, ubiquitous.

The protein resides in the cytoplasm. It participates in protein modification; protein ubiquitination. In terms of biological role, probable core component of multiple cullin-RING-based SCF (SKP1-CUL1-F-box) E3 ubiquitin-protein ligase complexes which mediate the ubiquitination and subsequent proteasomal degradation of target proteins. As a scaffold protein may contribute to catalysis through positioning of the substrate and the ubiquitin-conjugating enzyme. Required for developmentally programmed transitions from the G1 phase of the cell cycle to the G0 phase or the apoptotic pathway. In Caenorhabditis elegans, this protein is Cullin-1 (cul-1).